The chain runs to 316 residues: Pantothenate kinase (316 aa).

95–102 (GSVAVGKS) serves as a coordination point for ATP.

It belongs to the prokaryotic pantothenate kinase family.

The protein resides in the cytoplasm. It catalyses the reaction (R)-pantothenate + ATP = (R)-4'-phosphopantothenate + ADP + H(+). It participates in cofactor biosynthesis; coenzyme A biosynthesis; CoA from (R)-pantothenate: step 1/5. The sequence is that of Pantothenate kinase from Photorhabdus laumondii subsp. laumondii (strain DSM 15139 / CIP 105565 / TT01) (Photorhabdus luminescens subsp. laumondii).